We begin with the raw amino-acid sequence, 164 residues long: Type II secretion system protein M (164 aa).

At Met1 to Gln17 the chain is on the cytoplasmic side. A helical transmembrane segment spans residues Leu18 to Pro38. The Periplasmic segment spans residues Trp39–Ala164.

The protein belongs to the GSP M family. In terms of assembly, type II secretion system is composed of four main components: the outer membrane complex, the inner membrane complex, the cytoplasmic secretion ATPase and the periplasm-spanning pseudopilus. Forms homodimers. Interacts with OutL/GspL. Interacts with OutE/GspE and OutF/GspF.

The protein resides in the cell inner membrane. Its function is as follows. Inner membrane component of the type II secretion system required for the energy-dependent secretion of extracellular factors such as proteases and toxins from the periplasm. Plays a role in the complex assembly and recruits OutL resulting in a stable complex in the inner membrane. Provides thus a link between the energy-providing OutE protein in the cytoplasm and the rest of the T2SS machinery. The chain is Type II secretion system protein M (outM) from Pectobacterium carotovorum subsp. carotovorum (Erwinia carotovora subsp. carotovora).